The chain runs to 242 residues: DNA repair protein RecO (242 aa).

The protein belongs to the RecO family. Monomer.

Functionally, involved in DNA repair and RecF pathway recombination. This chain is DNA repair protein RecO, found in Shigella sonnei (strain Ss046).